Consider the following 467-residue polypeptide: MTCRTRFAPSPTGYLHIGGARTALYCWLEARRRNGQFLLRIEDTDRERSTQAAIDAILHAMDWLGLDYDEPPVYQTQRIERYNQVAARLLAEGKAYYAYDSKDTLNAMREAALRTGEKPRYNGAAREANLPYRDDPNRVIRFKNPHTGTVAFDDLIKGRIQISNSELDDMVILRPDGYPTYNFAVVVDDWDMNITEVIRGDDHINNTPRQINLYHALGAPLPTFAHLPMILDEQGAKLSKRTGAADVMQYRDSGYLPHALINYLVRLGWSHGDQELFNRQALIDLFQINDVNSKAARLDMAKLGWVNQHYLKTDDPATLAPPLVWHLEQRGIDVSAGPAPTDVILALRERVQTLKEMAEKAEIWYCPLQRYDEIAVAKHLKPGAETALLHARTLLAALPAWTVDNVDTALRTTATTLEIGMGKVAQPLRVAITGTQVSPDIAYTVYLTGRNEALKRIDAALIKISTA.

The 'HIGH' region signature appears at 9–19; the sequence is PSPTGYLHIGG. The 'KMSKS' region motif lies at 237 to 241; the sequence is KLSKR. An ATP-binding site is contributed by Lys-240.

The protein belongs to the class-I aminoacyl-tRNA synthetase family. Glutamate--tRNA ligase type 1 subfamily. Monomer.

The protein localises to the cytoplasm. It carries out the reaction tRNA(Glu) + L-glutamate + ATP = L-glutamyl-tRNA(Glu) + AMP + diphosphate. Functionally, catalyzes the attachment of glutamate to tRNA(Glu) in a two-step reaction: glutamate is first activated by ATP to form Glu-AMP and then transferred to the acceptor end of tRNA(Glu). The polypeptide is Glutamate--tRNA ligase (Xylella fastidiosa (strain M23)).